A 346-amino-acid polypeptide reads, in one-letter code: NADH-ubiquinone oxidoreductase chain 2 (346 aa).

11 helical membrane passes run 1–21 (MNPHATPVLVLSLALGTTITI), 25–45 (HWVLAWTGLEINTLAIIPLIS), 60–80 (FLTQAAASALVLFSSMTNAWA), 95–115 (CLLLTAAIAIKLGLVPFHFWF), 124–144 (LMTALLLSTLMKFPPLTLLLM), 149–169 (LNPALLTTMALASAALGGWMG), 178–195 (ILAFSSISHLGWIAIILV), 200–219 (LALLTFYLYTIMTSAVFMAL), 242–262 (ATLMLVLLSLAGLPPLTGFMP), 274–294 (EMTPAAMAIAMLSLLSLFFYL), and 326–346 (AILASLSILLLPLSPMIHAIV).

It belongs to the complex I subunit 2 family.

The protein localises to the mitochondrion inner membrane. The catalysed reaction is a ubiquinone + NADH + 5 H(+)(in) = a ubiquinol + NAD(+) + 4 H(+)(out). In terms of biological role, core subunit of the mitochondrial membrane respiratory chain NADH dehydrogenase (Complex I) that is believed to belong to the minimal assembly required for catalysis. Complex I functions in the transfer of electrons from NADH to the respiratory chain. The immediate electron acceptor for the enzyme is believed to be ubiquinone. This chain is NADH-ubiquinone oxidoreductase chain 2 (MT-ND2), found in Mareca americana (American wigeon).